The chain runs to 1494 residues: Serine/threonine-protein kinase VPS15 (1494 aa).

Glycine 2 carries the N-myristoyl glycine lipid modification. The 281-residue stretch at 27-307 (LVLKEVLGRG…VFPNYFSPFL (281 aa)) folds into the Protein kinase domain. ATP-binding positions include 33–41 (LGRGRFLKS) and lysine 54. Catalysis depends on aspartate 149, which acts as the Proton acceptor. HEAT repeat units lie at residues 383 to 421 (NSKD…LYDS), 480 to 517 (DRLQ…LVRD), 524 to 562 (KIFP…TAYG), 610 to 646 (KTIA…FFGQ), 648 to 685 (QSND…FVGQ), 687 to 724 (SVEE…SSFL), and 727 to 764 (RALL…CLGA). 2 disordered regions span residues 859 to 903 (QSVE…TVEL) and 1037 to 1064 (SASV…SVPD). Positions 1037–1047 (SASVTSEDASS) are enriched in low complexity. WD repeat units lie at residues 1079 to 1118 (EHRS…KDIS), 1127 to 1166 (LEGS…RGLG), 1184 to 1226 (KEGA…DAWT), 1231 to 1270 (PEEG…PVNS), 1276 to 1323 (ICPI…CHQV), 1371 to 1409 (PRLP…RSYC), and 1466 to 1494 (DSVQ…KVWK).

Belongs to the protein kinase superfamily. Ser/Thr protein kinase family. As to quaternary structure, interacts with VPS34. Component of a complex made of VPS38/USL1 and PI3K main subunits such as VPS15, ATG6/VPS30 and VPS34. Autophosphorylated. In terms of tissue distribution, mainly expressed in anthers, pollen grains and pollen tubes, and, to a lower extent, in other tissues and organs including seedlings, roots, stems, leaves, flowers, pitils and siliques.

It is found in the cytoplasm. The protein localises to the golgi apparatus. The protein resides in the trans-Golgi network membrane. Its subcellular location is the endosome membrane. The catalysed reaction is L-seryl-[protein] + ATP = O-phospho-L-seryl-[protein] + ADP + H(+). The enzyme catalyses L-threonyl-[protein] + ATP = O-phospho-L-threonyl-[protein] + ADP + H(+). In terms of biological role, serine/threonine-protein kinase required for cytoplasm to vacuole transport (Cvt) and autophagy as a part of the autophagy-specific VPS34 PI3-kinase complex I. Required for pollen development and germination, probably via the modulation of phosphatidylinositol 3-phosphate (PI3P) formation and vacuolar organization. The chain is Serine/threonine-protein kinase VPS15 from Arabidopsis thaliana (Mouse-ear cress).